The sequence spans 418 residues: Serine hydroxymethyltransferase (418 aa).

(6S)-5,6,7,8-tetrahydrofolate contacts are provided by residues L121 and G125–L127. K230 is modified (N6-(pyridoxal phosphate)lysine). S355–F357 serves as a coordination point for (6S)-5,6,7,8-tetrahydrofolate.

Belongs to the SHMT family. As to quaternary structure, homodimer. Requires pyridoxal 5'-phosphate as cofactor.

The protein localises to the cytoplasm. It catalyses the reaction (6R)-5,10-methylene-5,6,7,8-tetrahydrofolate + glycine + H2O = (6S)-5,6,7,8-tetrahydrofolate + L-serine. The protein operates within one-carbon metabolism; tetrahydrofolate interconversion. It functions in the pathway amino-acid biosynthesis; glycine biosynthesis; glycine from L-serine: step 1/1. In terms of biological role, catalyzes the reversible interconversion of serine and glycine with tetrahydrofolate (THF) serving as the one-carbon carrier. This reaction serves as the major source of one-carbon groups required for the biosynthesis of purines, thymidylate, methionine, and other important biomolecules. Also exhibits THF-independent aldolase activity toward beta-hydroxyamino acids, producing glycine and aldehydes, via a retro-aldol mechanism. The polypeptide is Serine hydroxymethyltransferase (Streptococcus agalactiae serotype III (strain NEM316)).